A 546-amino-acid chain; its full sequence is Probable protein kinase UbiB (546 aa).

The 379-residue stretch at 124–502 (DFDIKPLASA…HVRQGQSRYL (379 aa)) folds into the Protein kinase domain. Residues 130-138 (LASASIAQV) and K153 contribute to the ATP site. D288 acts as the Proton acceptor in catalysis. 2 helical membrane-spanning segments follow: residues 501–521 (YLLG…VSRP) and 522–542 (EWGL…FVGW).

This sequence belongs to the ABC1 family. UbiB subfamily.

It localises to the cell inner membrane. It functions in the pathway cofactor biosynthesis; ubiquinone biosynthesis [regulation]. In terms of biological role, is probably a protein kinase regulator of UbiI activity which is involved in aerobic coenzyme Q (ubiquinone) biosynthesis. The protein is Probable protein kinase UbiB of Escherichia fergusonii (strain ATCC 35469 / DSM 13698 / CCUG 18766 / IAM 14443 / JCM 21226 / LMG 7866 / NBRC 102419 / NCTC 12128 / CDC 0568-73).